We begin with the raw amino-acid sequence, 508 residues long: DNA polymerase II small subunit (508 aa).

The span at 66–80 (ASSAAQTSAPASTPP) shows a compositional bias: low complexity. Residues 66-122 (ASSAAQTSAPASTPPDEATTHTDPSATDTPPNHDGGRAATADARSVEIDGDMTGAST) form a disordered region. Residues 86–95 (HTDPSATDTP) show a composition bias toward polar residues.

It belongs to the DNA polymerase delta/II small subunit family. As to quaternary structure, heterodimer of a large subunit and a small subunit.

It catalyses the reaction DNA(n) + a 2'-deoxyribonucleoside 5'-triphosphate = DNA(n+1) + diphosphate. The catalysed reaction is Exonucleolytic cleavage in the 3'- to 5'-direction to yield nucleoside 5'-phosphates.. In terms of biological role, possesses two activities: a DNA synthesis (polymerase) and an exonucleolytic activity that degrades single-stranded DNA in the 3' to 5' direction. Has a template-primer preference which is characteristic of a replicative DNA polymerase. The chain is DNA polymerase II small subunit from Halobacterium salinarum (strain ATCC 29341 / DSM 671 / R1).